The chain runs to 135 residues: 30 kDa antigenic glycoprotein (135 aa).

The N-terminal stretch at 1–5 (GNTYS) is a signal peptide. Asn-22, Asn-31, Asn-57, and Asn-73 each carry an N-linked (GlcNAc...) asparagine glycan.

It to H.contortus 15 kDa excretory/secretory protein.

It localises to the secreted. The protein is 30 kDa antigenic glycoprotein of Trichostrongylus colubriformis (Black scour worm).